Consider the following 112-residue polypeptide: Peptidyl-tRNA hydrolase (112 aa).

The segment at 64–99 (EEAKRAGLPTGLISDAGRTQLEPGTPTALAIGPAPD) is disordered.

It belongs to the PTH2 family.

Its subcellular location is the cytoplasm. It catalyses the reaction an N-acyl-L-alpha-aminoacyl-tRNA + H2O = an N-acyl-L-amino acid + a tRNA + H(+). In terms of biological role, the natural substrate for this enzyme may be peptidyl-tRNAs which drop off the ribosome during protein synthesis. The chain is Peptidyl-tRNA hydrolase from Halobacterium salinarum (strain ATCC 29341 / DSM 671 / R1).